Here is an 82-residue protein sequence, read N- to C-terminus: Large ribosomal subunit protein bL27 (82 aa).

The segment at 1–26 is disordered; that stretch reads MAHKKGQGASRNGRDSESKRLGMKVG.

Belongs to the bacterial ribosomal protein bL27 family.

In Chlamydia felis (strain Fe/C-56) (Chlamydophila felis), this protein is Large ribosomal subunit protein bL27.